Reading from the N-terminus, the 125-residue chain is Ribosome-binding factor A (125 aa).

It belongs to the RbfA family. As to quaternary structure, monomer. Binds 30S ribosomal subunits, but not 50S ribosomal subunits or 70S ribosomes.

The protein localises to the cytoplasm. One of several proteins that assist in the late maturation steps of the functional core of the 30S ribosomal subunit. Associates with free 30S ribosomal subunits (but not with 30S subunits that are part of 70S ribosomes or polysomes). Required for efficient processing of 16S rRNA. May interact with the 5'-terminal helix region of 16S rRNA. This is Ribosome-binding factor A from Xylella fastidiosa (strain M23).